The sequence spans 345 residues: S-adenosylmethionine:tRNA ribosyltransferase-isomerase (345 aa).

This sequence belongs to the QueA family. Monomer.

It is found in the cytoplasm. The catalysed reaction is 7-aminomethyl-7-carbaguanosine(34) in tRNA + S-adenosyl-L-methionine = epoxyqueuosine(34) in tRNA + adenine + L-methionine + 2 H(+). It functions in the pathway tRNA modification; tRNA-queuosine biosynthesis. Its function is as follows. Transfers and isomerizes the ribose moiety from AdoMet to the 7-aminomethyl group of 7-deazaguanine (preQ1-tRNA) to give epoxyqueuosine (oQ-tRNA). This chain is S-adenosylmethionine:tRNA ribosyltransferase-isomerase, found in Aromatoleum aromaticum (strain DSM 19018 / LMG 30748 / EbN1) (Azoarcus sp. (strain EbN1)).